A 151-amino-acid polypeptide reads, in one-letter code: Ubiquitin-conjugating enzyme E2 W (151 aa).

A Peptide (Met-Gly) (interchain with G-Cter in ubiquitin) cross-link involves residue Met-1. The UBC core domain occupies 3-151; it reads SMQKRLQKEL…TKWWYHDDTC (149 aa). The active-site Glycyl thioester intermediate is Cys-91.

The protein belongs to the ubiquitin-conjugating enzyme family. Homodimer. Interacts with FANCL. Interacts with STUB1/CHIP. Post-translationally, ubiquitinated in vitro in the presence of FANCL. Autoubiquitinated at Met-1.

It is found in the nucleus. The catalysed reaction is S-ubiquitinyl-[E1 ubiquitin-activating enzyme]-L-cysteine + [E2 ubiquitin-conjugating enzyme]-L-cysteine = [E1 ubiquitin-activating enzyme]-L-cysteine + S-ubiquitinyl-[E2 ubiquitin-conjugating enzyme]-L-cysteine.. The enzyme catalyses S-ubiquitinyl-[E1 ubiquitin-activating enzyme]-L-cysteine + [acceptor protein]-N-terminal-amino acid = [E1 ubiquitin-activating enzyme]-L-cysteine + N-terminal-ubiquitinyl-[acceptor protein].. The protein operates within protein modification; protein ubiquitination. Its function is as follows. Accepts ubiquitin from the E1 complex and catalyzes its covalent attachment to other proteins. Specifically monoubiquitinates the N-terminus of various substrates, including ATXN3, MAPT/TAU, POLR2H/RPB8 and STUB1/CHIP, by recognizing backbone atoms of disordered N-termini. Involved in degradation of misfolded chaperone substrates by mediating monoubiquitination of STUB1/CHIP, leading to recruitment of ATXN3 to monoubiquitinated STUB1/CHIP, and restriction of the length of ubiquitin chain attached to STUB1/CHIP substrates by ATXN3. After UV irradiation, but not after mitomycin-C (MMC) treatment, acts as a specific E2 ubiquitin-conjugating enzyme for the Fanconi anemia complex by associating with E3 ubiquitin-protein ligase FANCL and catalyzing monoubiquitination of FANCD2, a key step in the DNA damage pathway. In vitro catalyzes 'Lys-11'-linked polyubiquitination. UBE2W-catalyzed ubiquitination also occurs in the presence of inactive RING/U-box type E3s, i.e. lacking the active site cysteine residues to form thioester bonds with ubiquitin, or even in the absence of E3, albeit at a slower rate. The sequence is that of Ubiquitin-conjugating enzyme E2 W (UBE2W) from Bos taurus (Bovine).